Consider the following 2148-residue polypeptide: Polyketide synthase 1 (2148 aa).

Residues 19 to 261 (FIFGDQSSCN…TPLAVHAPYH (243 aa)) form an N-terminal acylcarrier protein transacylase domain (SAT) region. In terms of domain architecture, Ketosynthase family 3 (KS3) spans 394-829 (ESKIAIIGMS…GGNTALLVED (436 aa)). Active-site for beta-ketoacyl synthase activity residues include Cys-566, His-701, and His-745. The malonyl-CoA:ACP transacylase (MAT) domain stretch occupies residues 930-1236 (FVFSGQGSQY…MRNKDGWQVL (307 aa)). Catalysis depends on Ser-1018, which acts as the For acyl/malonyl transferase activity. The product template (PT) domain stretch occupies residues 1310–1624 (TASVHRMVHE…RKVLNTAMPP (315 aa)). An N-terminal hotdog fold region spans residues 1314–1447 (HRMVHESVEK…SSLHFEQPKV (134 aa)). In terms of domain architecture, PKS/mFAS DH spans 1314-1619 (HRMVHESVEK…FQGIPRKVLN (306 aa)). Residue His-1346 is the Proton acceptor; for dehydratase activity of the active site. Residues 1474–1619 (LNSRMSSGVI…FQGIPRKVLN (146 aa)) form a C-terminal hotdog fold region. The active-site Proton donor; for dehydratase activity is Asp-1533. The segment at 1619–1655 (NTAMPPPKSQNEAPVRSGPAKPAAKPPRSASSEHSGH) is disordered. Over residues 1634-1650 (RSGPAKPAAKPPRSASS) the composition is skewed to low complexity. The 75-residue stretch at 1678-1752 (RNPMLPVFKI…DLAAQLGLDT (75 aa)) folds into the Carrier 1 domain. Ser-1712 carries the O-(pantetheine 4'-phosphoryl)serine modification. Low complexity predominate over residues 1755-1790 (SDQSSGQSSSSGGLSPRSDSIGEITSSVTTPPSLSP). Residues 1755–1796 (SDQSSGQSSSSGGLSPRSDSIGEITSSVTTPPSLSPRGSVSG) are disordered. In terms of domain architecture, Carrier 2 spans 1793 to 1870 (SVSGSQCKDV…SFKHMFQQGH (78 aa)). Position 1830 is an O-(pantetheine 4'-phosphoryl)serine (Ser-1830). The segment at 1882-2146 (LKQYRATSTL…ERVAAFIRST (265 aa)) is thioesterase (TE) domain. The For thioesterase activity role is filled by Ser-1973.

It participates in pigment biosynthesis. In terms of biological role, polyketide synthase; part of the Pks1 gene cluster that mediates the biosynthesis of an anthraquinone derivative pigment that contributes to conidial pigmentation that provides protection from UV radiation, heat and cold stress. The polyketide synthase Pks1 produces 1-acetyl-2,4,6,8-tetrahydroxy-9,10-anthraquinone though condensation of acetyl-CoA with malonyl-CoA. The dehydratase EthD and the laccase Mlac1 further convert the anthraquinone derivative into the final conidial pigment. This chain is Polyketide synthase 1, found in Metarhizium robertsii (strain ARSEF 23 / ATCC MYA-3075) (Metarhizium anisopliae (strain ARSEF 23)).